The primary structure comprises 393 residues: Short-chain dehydrogenase/reductase family 42E member 1 (393 aa).

Tyrosine 152 serves as the catalytic Proton acceptor. Lysine 156 serves as a coordination point for NAD(+). 2 helical membrane-spanning segments follow: residues leucine 282–glycine 302 and glycine 371–leucine 391.

Belongs to the 3-beta-HSD family.

It is found in the membrane. The polypeptide is Short-chain dehydrogenase/reductase family 42E member 1 (SDR42E1) (Bos taurus (Bovine)).